A 150-amino-acid polypeptide reads, in one-letter code: Endoribonuclease YbeY (150 aa).

Zn(2+)-binding residues include His115, His119, and His125.

The protein belongs to the endoribonuclease YbeY family. Requires Zn(2+) as cofactor.

It is found in the cytoplasm. Single strand-specific metallo-endoribonuclease involved in late-stage 70S ribosome quality control and in maturation of the 3' terminus of the 16S rRNA. The polypeptide is Endoribonuclease YbeY (Aquifex aeolicus (strain VF5)).